Here is a 274-residue protein sequence, read N- to C-terminus: Phosphatidylglycerol--prolipoprotein diacylglyceryl transferase (274 aa).

4 helical membrane-spanning segments follow: residues Trp-24–Ser-44, Leu-60–Tyr-80, Trp-96–Phe-116, and Leu-122–Gly-142. A 1,2-diacyl-sn-glycero-3-phospho-(1'-sn-glycerol) is bound at residue Arg-143. Transmembrane regions (helical) follow at residues Ala-182–Leu-202, Gly-207–Phe-227, and Val-241–Val-261.

The protein belongs to the Lgt family.

It localises to the cell inner membrane. The catalysed reaction is L-cysteinyl-[prolipoprotein] + a 1,2-diacyl-sn-glycero-3-phospho-(1'-sn-glycerol) = an S-1,2-diacyl-sn-glyceryl-L-cysteinyl-[prolipoprotein] + sn-glycerol 1-phosphate + H(+). The protein operates within protein modification; lipoprotein biosynthesis (diacylglyceryl transfer). Functionally, catalyzes the transfer of the diacylglyceryl group from phosphatidylglycerol to the sulfhydryl group of the N-terminal cysteine of a prolipoprotein, the first step in the formation of mature lipoproteins. This is Phosphatidylglycerol--prolipoprotein diacylglyceryl transferase from Rhodospirillum rubrum (strain ATCC 11170 / ATH 1.1.1 / DSM 467 / LMG 4362 / NCIMB 8255 / S1).